The primary structure comprises 565 residues: Proline--tRNA ligase (565 aa).

Belongs to the class-II aminoacyl-tRNA synthetase family. ProS type 1 subfamily. Homodimer.

The protein resides in the cytoplasm. It carries out the reaction tRNA(Pro) + L-proline + ATP = L-prolyl-tRNA(Pro) + AMP + diphosphate. Its function is as follows. Catalyzes the attachment of proline to tRNA(Pro) in a two-step reaction: proline is first activated by ATP to form Pro-AMP and then transferred to the acceptor end of tRNA(Pro). As ProRS can inadvertently accommodate and process non-cognate amino acids such as alanine and cysteine, to avoid such errors it has two additional distinct editing activities against alanine. One activity is designated as 'pretransfer' editing and involves the tRNA(Pro)-independent hydrolysis of activated Ala-AMP. The other activity is designated 'posttransfer' editing and involves deacylation of mischarged Ala-tRNA(Pro). The misacylated Cys-tRNA(Pro) is not edited by ProRS. The chain is Proline--tRNA ligase from Francisella tularensis subsp. mediasiatica (strain FSC147).